The primary structure comprises 204 residues: Ribosomal RNA small subunit methyltransferase G (204 aa).

Residues G69, F74, 123-124 (IE), and R137 each bind S-adenosyl-L-methionine.

This sequence belongs to the methyltransferase superfamily. RNA methyltransferase RsmG family.

Its subcellular location is the cytoplasm. The catalysed reaction is guanosine(527) in 16S rRNA + S-adenosyl-L-methionine = N(7)-methylguanosine(527) in 16S rRNA + S-adenosyl-L-homocysteine. Functionally, specifically methylates the N7 position of guanine in position 527 of 16S rRNA. The protein is Ribosomal RNA small subunit methyltransferase G of Ruegeria pomeroyi (strain ATCC 700808 / DSM 15171 / DSS-3) (Silicibacter pomeroyi).